The chain runs to 443 residues: Pyrrolysine--tRNA ligase (443 aa).

Residues 103–177 (VRKAMPKSVA…PAAPVPTSAP (75 aa)) form a disordered region. Positions 131–177 (PAPATPVSAPAQAPAPSTGSASATSASAQRMANSAAAPAAPVPTSAP) are enriched in low complexity.

Belongs to the class-II aminoacyl-tRNA synthetase family.

It is found in the cytoplasm. It catalyses the reaction tRNA(Pyl) + L-pyrrolysine + ATP = L-pyrrolysyl-tRNA(Pyl) + AMP + diphosphate. In terms of biological role, catalyzes the attachment of pyrrolysine to tRNA(Pyl). Pyrrolysine is a lysine derivative encoded by the termination codon UAG. In Methanosarcina acetivorans (strain ATCC 35395 / DSM 2834 / JCM 12185 / C2A), this protein is Pyrrolysine--tRNA ligase.